A 331-amino-acid polypeptide reads, in one-letter code: Ribosomal RNA small subunit methyltransferase C (331 aa).

It belongs to the methyltransferase superfamily. RsmC family. As to quaternary structure, monomer.

It localises to the cytoplasm. The enzyme catalyses guanosine(1207) in 16S rRNA + S-adenosyl-L-methionine = N(2)-methylguanosine(1207) in 16S rRNA + S-adenosyl-L-homocysteine + H(+). In terms of biological role, specifically methylates the guanine in position 1207 of 16S rRNA in the 30S particle. The sequence is that of Ribosomal RNA small subunit methyltransferase C from Pseudomonas putida (strain W619).